A 594-amino-acid chain; its full sequence is Neuronal PAS domain-containing protein 1 (594 aa).

In terms of domain architecture, bHLH spans 45–98; the sequence is QRKEKSRNAARWRRGKENLEFFELAKLLPLPGAISSQLDKASIVRLSVTYLRLR. In terms of domain architecture, PAS 1 spans 135–205; the sequence is EQHLGGHILQ…EQLGLRAASI (71 aa). The disordered stretch occupies residues 206 to 237; the sequence is GPPTPPSVSSSSSSSSSSLVDTPEIEASPTEA. Low complexity predominate over residues 212 to 223; the sequence is SVSSSSSSSSSS. Residues 294-360 enclose the PAS 2 domain; that stretch reads APLAELPLHG…IRQSHLDLLD (67 aa). The 44-residue stretch at 366–409 folds into the PAC domain; it reads TGYYRWLQRAGGFVWLQSVATVAGNGKSTGEHHVLWVSHVLSNA. The disordered stretch occupies residues 427-498; the sequence is QEEPSRPGPE…DPPAPPRPEF (72 aa). Basic and acidic residues predominate over residues 453-480; it reads DQDKDKDPQARGKRIKVEASPKEARGSE.

In terms of assembly, efficient DNA binding requires dimerization with another bHLH protein. Interacts with ARNT; forms a heterodimer that binds core DNA sequence 5'-[AG]CGTG-3' within the hypoxia response element (HRE) leading to a transcriptional repressor on its target gene TH. In terms of tissue distribution, expressed in brain in inhibitory interneurons. Also found in spinal cord.

It localises to the nucleus. May control regulatory pathways relevant to schizophrenia and to psychotic illness. May play a role in late central nervous system development by modulating EPO expression in response to cellular oxygen level. Forms a heterodimer that binds core DNA sequence 5'-TACGTG-3' within the hypoxia response element (HRE) leading to transcriptional repression on its target gene TH. This Mus musculus (Mouse) protein is Neuronal PAS domain-containing protein 1 (Npas1).